A 501-amino-acid chain; its full sequence is ADP,ATP carrier protein 3 (501 aa).

12 helical membrane-spanning segments follow: residues 23-43, 59-79, 90-110, 146-166, 183-203, 227-247, 293-313, 326-346, 361-381, 383-403, 446-466, and 470-490; these read LKLF…FGAL, IISL…TVLY, YIFY…AYII, YALM…LMFW, PVLG…LVFF, IMLQ…MLLF, IALL…PWKA, FNFM…FMVI, LLTP…IIFI, EIGA…VGAI, FGKS…PTAT, and IIIY…WNVI.

This sequence belongs to the ADP/ATP translocase tlc family.

It localises to the cell membrane. Functionally, provides the rickettsial cell with host ATP in exchange for rickettsial ADP. This is an obligate exchange system. This energy acquiring activity is an important component of rickettsial parasitism. The chain is ADP,ATP carrier protein 3 (tlcC) from Rickettsia felis (strain ATCC VR-1525 / URRWXCal2) (Rickettsia azadi).